The sequence spans 590 residues: Aspartate--tRNA(Asp/Asn) ligase (590 aa).

Glu-178 contributes to the L-aspartate binding site. Residues 202-205 (QIYK) are aspartate. Arg-224 serves as a coordination point for L-aspartate. Residues 224–226 (RDE) and Gln-233 each bind ATP. Residue His-453 coordinates L-aspartate. Glu-487 is an ATP binding site. L-aspartate is bound at residue Arg-494. Residue 539–542 (GLDR) coordinates ATP.

The protein belongs to the class-II aminoacyl-tRNA synthetase family. Type 1 subfamily. In terms of assembly, homodimer.

Its subcellular location is the cytoplasm. The enzyme catalyses tRNA(Asx) + L-aspartate + ATP = L-aspartyl-tRNA(Asx) + AMP + diphosphate. Functionally, aspartyl-tRNA synthetase with relaxed tRNA specificity since it is able to aspartylate not only its cognate tRNA(Asp) but also tRNA(Asn). Reaction proceeds in two steps: L-aspartate is first activated by ATP to form Asp-AMP and then transferred to the acceptor end of tRNA(Asp/Asn). The chain is Aspartate--tRNA(Asp/Asn) ligase from Treponema denticola (strain ATCC 35405 / DSM 14222 / CIP 103919 / JCM 8153 / KCTC 15104).